Here is a 261-residue protein sequence, read N- to C-terminus: uncharacterized protein (261 aa).

Belongs to the FwdC/FmdC family.

This is an uncharacterized protein from Methanocaldococcus jannaschii (strain ATCC 43067 / DSM 2661 / JAL-1 / JCM 10045 / NBRC 100440) (Methanococcus jannaschii).